A 513-amino-acid chain; its full sequence is ATP synthase subunit alpha (513 aa).

Gly169–Thr176 provides a ligand contact to ATP.

Belongs to the ATPase alpha/beta chains family. F-type ATPases have 2 components, CF(1) - the catalytic core - and CF(0) - the membrane proton channel. CF(1) has five subunits: alpha(3), beta(3), gamma(1), delta(1), epsilon(1). CF(0) has three main subunits: a(1), b(2) and c(9-12). The alpha and beta chains form an alternating ring which encloses part of the gamma chain. CF(1) is attached to CF(0) by a central stalk formed by the gamma and epsilon chains, while a peripheral stalk is formed by the delta and b chains.

It localises to the cell inner membrane. The catalysed reaction is ATP + H2O + 4 H(+)(in) = ADP + phosphate + 5 H(+)(out). Its function is as follows. Produces ATP from ADP in the presence of a proton gradient across the membrane. The alpha chain is a regulatory subunit. This chain is ATP synthase subunit alpha, found in Burkholderia vietnamiensis (strain G4 / LMG 22486) (Burkholderia cepacia (strain R1808)).